Here is a 444-residue protein sequence, read N- to C-terminus: Probable glycine dehydrogenase (decarboxylating) subunit 1 (444 aa).

It belongs to the GcvP family. N-terminal subunit subfamily. As to quaternary structure, the glycine cleavage system is composed of four proteins: P, T, L and H. In this organism, the P 'protein' is a heterodimer of two subunits.

The catalysed reaction is N(6)-[(R)-lipoyl]-L-lysyl-[glycine-cleavage complex H protein] + glycine + H(+) = N(6)-[(R)-S(8)-aminomethyldihydrolipoyl]-L-lysyl-[glycine-cleavage complex H protein] + CO2. Its function is as follows. The glycine cleavage system catalyzes the degradation of glycine. The P protein binds the alpha-amino group of glycine through its pyridoxal phosphate cofactor; CO(2) is released and the remaining methylamine moiety is then transferred to the lipoamide cofactor of the H protein. The sequence is that of Probable glycine dehydrogenase (decarboxylating) subunit 1 from Chlorobium luteolum (strain DSM 273 / BCRC 81028 / 2530) (Pelodictyon luteolum).